Reading from the N-terminus, the 840-residue chain is Translation initiation factor IF-2 (840 aa).

Positions 95 to 143 (RSPDEIEAERQRELEEQRAAEEAERLKAEEAAARQRAEEEARKAEEAAR) are enriched in basic and acidic residues. Disordered regions lie at residues 95-155 (RSPD…ATAG) and 173-256 (PAAV…PTGP). The segment covering 144–155 (AKAAQEAAATAG) has biased composition (low complexity). Basic and acidic residues-rich tracts occupy residues 175–191 (AVEERKKEEPRRVPKRD) and 223–232 (STDEESDGYR). Over residues 233 to 247 (RGGRGGKSKLKKRNQ) the composition is skewed to basic residues. In terms of domain architecture, tr-type G spans 340-509 (TRAPVVTVMG…LLQAEVLELK (170 aa)). A G1 region spans residues 349–356 (GHVDHGKT). GTP is bound at residue 349–356 (GHVDHGKT). The interval 374-378 (GITQH) is G2. A G3 region spans residues 395–398 (DTPG). GTP-binding positions include 395–399 (DTPGH) and 449–452 (NKID). A G4 region spans residues 449 to 452 (NKID). Residues 485-487 (SAK) are G5.

This sequence belongs to the TRAFAC class translation factor GTPase superfamily. Classic translation factor GTPase family. IF-2 subfamily.

It localises to the cytoplasm. In terms of biological role, one of the essential components for the initiation of protein synthesis. Protects formylmethionyl-tRNA from spontaneous hydrolysis and promotes its binding to the 30S ribosomal subunits. Also involved in the hydrolysis of GTP during the formation of the 70S ribosomal complex. The polypeptide is Translation initiation factor IF-2 (Pseudomonas aeruginosa (strain ATCC 15692 / DSM 22644 / CIP 104116 / JCM 14847 / LMG 12228 / 1C / PRS 101 / PAO1)).